The following is a 264-amino-acid chain: Diphthine synthase (264 aa).

S-adenosyl-L-methionine is bound by residues Leu10, Asp87, Val90, 115-116 (SI), Leu166, Ala209, and His234.

It belongs to the diphthine synthase family. In terms of assembly, homodimer.

It catalyses the reaction 2-[(3S)-amino-3-carboxypropyl]-L-histidyl-[translation elongation factor 2] + 3 S-adenosyl-L-methionine = diphthine-[translation elongation factor 2] + 3 S-adenosyl-L-homocysteine + 3 H(+). It participates in protein modification; peptidyl-diphthamide biosynthesis. Functionally, S-adenosyl-L-methionine-dependent methyltransferase that catalyzes the trimethylation of the amino group of the modified target histidine residue in translation elongation factor 2 (EF-2), to form an intermediate called diphthine. The three successive methylation reactions represent the second step of diphthamide biosynthesis. This Thermococcus kodakarensis (strain ATCC BAA-918 / JCM 12380 / KOD1) (Pyrococcus kodakaraensis (strain KOD1)) protein is Diphthine synthase.